The chain runs to 245 residues: tRNA pseudouridine synthase A 2 (245 aa).

The active-site Nucleophile is Asp53. Tyr111 is a substrate binding site.

It belongs to the tRNA pseudouridine synthase TruA family. As to quaternary structure, homodimer.

The catalysed reaction is uridine(38/39/40) in tRNA = pseudouridine(38/39/40) in tRNA. In terms of biological role, formation of pseudouridine at positions 38, 39 and 40 in the anticodon stem and loop of transfer RNAs. The chain is tRNA pseudouridine synthase A 2 from Bacillus anthracis.